The chain runs to 563 residues: Putative solute carrier family 26 member 10P (563 aa).

The next 5 helical transmembrane spans lie at 45 to 65 (ALLA…PVLI), 75 to 91 (LSTG…GSAV), 116 to 136 (VGVA…MFVL), 152 to 172 (ALTS…LLGL), and 352 to 372 (LAGL…GPFF). Residues 406 to 541 (RVDFLLQVPG…VSVQDAAAYA (136 aa)) form the STAS domain.

Belongs to the SLC26A/SulP transporter (TC 2.A.53) family.

It localises to the membrane. In terms of biological role, chloride/bicarbonate exchanger. The polypeptide is Putative solute carrier family 26 member 10P (SLC26A10P) (Homo sapiens (Human)).